A 296-amino-acid chain; its full sequence is Zinc finger protein 75A (296 aa).

Residues 1-66 form the KRAB domain; sequence MYFSQEEWEL…VSPEFKDSAG (66 aa). 5 C2H2-type zinc fingers span residues 161–183, 189–211, 217–239, 245–267, and 273–295; these read FKCQ…QRIH, YKCQ…LTTH, YKCS…QRTH, FTCH…RRTH, and YTCS…QKLH.

It belongs to the krueppel C2H2-type zinc-finger protein family.

It localises to the nucleus. Functionally, may be involved in transcriptional regulation. This is Zinc finger protein 75A (ZNF75A) from Homo sapiens (Human).